The following is a 230-amino-acid chain: Octanoyltransferase (230 aa).

The 200-residue stretch at 31–230 folds into the BPL/LPL catalytic domain; the sequence is PETPDELWIC…GDKLTRYLAP (200 aa). Residues 70–77, 163–165, and 176–178 contribute to the substrate site; these read RGGQVTYH, ALG, and GVA. The active-site Acyl-thioester intermediate is Cys-194.

It belongs to the LipB family.

Its subcellular location is the cytoplasm. The enzyme catalyses octanoyl-[ACP] + L-lysyl-[protein] = N(6)-octanoyl-L-lysyl-[protein] + holo-[ACP] + H(+). The protein operates within protein modification; protein lipoylation via endogenous pathway; protein N(6)-(lipoyl)lysine from octanoyl-[acyl-carrier-protein]: step 1/2. Catalyzes the transfer of endogenously produced octanoic acid from octanoyl-acyl-carrier-protein onto the lipoyl domains of lipoate-dependent enzymes. Lipoyl-ACP can also act as a substrate although octanoyl-ACP is likely to be the physiological substrate. This Albidiferax ferrireducens (strain ATCC BAA-621 / DSM 15236 / T118) (Rhodoferax ferrireducens) protein is Octanoyltransferase.